A 358-amino-acid chain; its full sequence is Nuclear receptor subfamily 1 group I member 3 (358 aa).

Residues Pro18–Ser93 constitute a DNA-binding region (nuclear receptor). The segment at Cys21 to Cys41 adopts an NR C4-type zinc-finger fold. Thr48 is subject to Phosphothreonine; by PKC. The NR C4-type zinc finger occupies Cys57–Cys81. The region spanning Gln119 to Ser358 is the NR LBD domain.

The protein belongs to the nuclear hormone receptor family. NR1 subfamily. In terms of assembly, heterodimer of NR1I3 and RXR. Interacts with PSMC4. Interacts with ECT2. Directly interacts with DNAJC7; this complex may also include HSP90. Interacts with CRY1. Interacts with CRY2 in a ligand-dependent manner. In terms of processing, phosphorylated at Thr-48 by PKC, dephosphorylation of Thr-48 is required for nuclear translocation and activation.

It localises to the nucleus. Its subcellular location is the cytoplasm. The protein localises to the cytoskeleton. Binds and transactivates the retinoic acid response elements that control expression of the retinoic acid receptor beta 2 and alcohol dehydrogenase 3 genes. Transactivates both the phenobarbital responsive element module of the human CYP2B6 gene and the CYP3A4 xenobiotic response element. The protein is Nuclear receptor subfamily 1 group I member 3 (Nr1i3) of Rattus norvegicus (Rat).